We begin with the raw amino-acid sequence, 122 residues long: MIQPQTHLNVADNSGARELMCIRIIGASNRRYAHIGDVIVAVIKEAVPNMPLERSEVIRAVIVRTCKELKRDNGMIIRYDDNAAVVIDQEGNPKGTRVFGAIARELRQLSFTKIVSLAPEVL.

This sequence belongs to the universal ribosomal protein uL14 family. Part of the 50S ribosomal subunit.

It is found in the plastid. The protein localises to the chloroplast. Its function is as follows. Binds to 23S rRNA. This chain is Large ribosomal subunit protein uL14c, found in Platanus occidentalis (Sycamore).